Reading from the N-terminus, the 395-residue chain is Argininosuccinate synthase (395 aa).

ATP is bound by residues 6 to 14 (AYSGGLDTS) and Ala-33. Residue Tyr-84 coordinates L-citrulline. Gly-114 is a binding site for ATP. L-aspartate contacts are provided by Thr-116, Asn-120, and Asp-121. L-citrulline is bound at residue Asn-120. L-citrulline-binding residues include Arg-124, Ser-173, Ser-182, Glu-258, and Tyr-270.

The protein belongs to the argininosuccinate synthase family. Type 1 subfamily. Homotetramer.

It localises to the cytoplasm. It catalyses the reaction L-citrulline + L-aspartate + ATP = 2-(N(omega)-L-arginino)succinate + AMP + diphosphate + H(+). It participates in amino-acid biosynthesis; L-arginine biosynthesis; L-arginine from L-ornithine and carbamoyl phosphate: step 2/3. The protein is Argininosuccinate synthase of Rhodococcoides fascians (Rhodococcus fascians).